We begin with the raw amino-acid sequence, 347 residues long: Phenylalanine--tRNA ligase alpha subunit (347 aa).

Glu261 is a Mg(2+) binding site.

This sequence belongs to the class-II aminoacyl-tRNA synthetase family. Phe-tRNA synthetase alpha subunit type 1 subfamily. As to quaternary structure, tetramer of two alpha and two beta subunits. The cofactor is Mg(2+).

The protein localises to the cytoplasm. It catalyses the reaction tRNA(Phe) + L-phenylalanine + ATP = L-phenylalanyl-tRNA(Phe) + AMP + diphosphate + H(+). The chain is Phenylalanine--tRNA ligase alpha subunit from Streptococcus equi subsp. equi (strain 4047).